Consider the following 257-residue polypeptide: Protein THYLAKOID ASSEMBLY 8-like, chloroplastic (257 aa).

Residues 1-55 (MTAIRVCSRKFPTFASIFFQNITRNPSIHRISFSNLKPKTLLHPIPPKPFTVFVS) constitute a chloroplast transit peptide. PPR repeat units lie at residues 142–176 (DVFM…NLFP) and 177–211 (DSQT…PDPP).

It belongs to the PPR family. P subfamily.

Its subcellular location is the plastid. It localises to the chloroplast. Its function is as follows. Binds weakly to specific single strand RNA (ssRNA). The sequence is that of Protein THYLAKOID ASSEMBLY 8-like, chloroplastic from Arabidopsis thaliana (Mouse-ear cress).